A 402-amino-acid chain; its full sequence is Protein FixF (402 aa).

This is Protein FixF (fixF) from Sinorhizobium fredii (strain NBRC 101917 / NGR234).